We begin with the raw amino-acid sequence, 703 residues long: Fibulin-1 (703 aa).

The N-terminal stretch at 1–29 (MERAAPSRRVPLPLLLLGGLALLAAGVDA) is a signal peptide. Intrachain disulfides connect C36–C61, C37–C68, C50–C69, C78–C109, C91–C110, C112–C136, C113–C143, C126–C144, C180–C190, C186–C199, C201–C214, C220–C233, C227–C242, C248–C260, C266–C279, C273–C288, C294–C306, C312–C325, C319–C334, C341–C354, C360–C373, C367–C382, C384–C397, C403–C415, C411–C424, C426–C439, C445–C454, C450–C463, C465–C479, C485–C498, C494–C507, C509–C523, C529–C542, C536–C551, and C556–C577. Anaphylatoxin-like domains follow at residues 36 to 76 (CCAD…LEEL), 77 to 111 (HCAT…RCCH), and 112 to 144 (CCLL…QACC). A glycan (N-linked (GlcNAc...) (complex) asparagine) is linked at N98. Residues 176–215 (LNDRCRGGGPCKQQCRDTGDEVVCSCFVGYQLLSDGVSCE) enclose the EGF-like 1 domain. The EGF-like 2; calcium-binding domain maps to 216–261 (DVNECITGSHSCRLGESCINTVGSFRCQRDSSCGTGYELTEDNSCK). The EGF-like 3; calcium-binding domain occupies 262–307 (DIDECESGIHNCLPDFICQNTLGSFRCRPKLQCKSGFIQDALGNCI). The EGF-like 4; calcium-binding domain occupies 308–355 (DINECLSISAPCPIGHTCINTEGSYTCQKNVPNCGRGYHLNEEGTRCV). The region spanning 356–398 (DVDECAPPAEPCGKGHRCVNSPGSFRCECKTGYYFDGISRMCV) is the EGF-like 5; calcium-binding domain. A self-association and FN1-binding; calcium is necessary for homotypic binding, but not for heterotypic binding region spans residues 356–440 (DVDECAPPAE…RLSVDGRSCE (85 aa)). In terms of domain architecture, EGF-like 6; calcium-binding spans 399–440 (DVNECQRYPGRLCGHKCENTLGSYLCSCSVGFRLSVDGRSCE). The 40-residue stretch at 441 to 480 (DINECSSSPCSQECANVYGSYQCYCRRGYQLSDVDGVTCE) folds into the EGF-like 7; calcium-binding domain. The EGF-like 8; calcium-binding domain maps to 481–524 (DIDECALPTGGHICSYRCINIPGSFQCSCPSSGYRLAPNGRNCQ). In terms of domain architecture, EGF-like 9; calcium-binding spans 525–578 (DIDECVTGIHNCSINETCFNIQGGFRCLAFECPENYRRSAATLQQEKTDTVRCI). N-linked (GlcNAc...) asparagine glycans are attached at residues N535 and N539.

It belongs to the fibulin family. In terms of assembly, homomultimerizes and interacts with various extracellular matrix components such as FN1, LAMA1, LAMA2, NID, ACAN, CSPG2 and type IV collagen. Also interacts with APP and FGB. Interacts with FBLN7. Interacts with CCN3. (Microbial infection) Interacts with human papillomavirus/HPV type 16, 18 and 31 proteins E6. Isoform A and isoform B are only expressed in placenta. Isoform C and isoform D are expressed in a variety of tissues and cultured cells.

The protein resides in the secreted. It is found in the extracellular space. Its subcellular location is the extracellular matrix. Its function is as follows. Incorporated into fibronectin-containing matrix fibers. May play a role in cell adhesion and migration along protein fibers within the extracellular matrix (ECM). Could be important for certain developmental processes and contribute to the supramolecular organization of ECM architecture, in particular to those of basement membranes. Has been implicated in a role in cellular transformation and tumor invasion, it appears to be a tumor suppressor. May play a role in haemostasis and thrombosis owing to its ability to bind fibrinogen and incorporate into clots. Could play a significant role in modulating the neurotrophic activities of APP, particularly soluble APP. This is Fibulin-1 (FBLN1) from Homo sapiens (Human).